The sequence spans 127 residues: Aspartate 1-decarboxylase (127 aa).

The active-site Schiff-base intermediate with substrate; via pyruvic acid is Ser25. The residue at position 25 (Ser25) is a Pyruvic acid (Ser). Thr57 serves as a coordination point for substrate. The Proton donor role is filled by Tyr58. Position 73 to 75 (73 to 75) interacts with substrate; it reads GAA.

Belongs to the PanD family. Heterooctamer of four alpha and four beta subunits. Pyruvate is required as a cofactor. Post-translationally, is synthesized initially as an inactive proenzyme, which is activated by self-cleavage at a specific serine bond to produce a beta-subunit with a hydroxyl group at its C-terminus and an alpha-subunit with a pyruvoyl group at its N-terminus.

Its subcellular location is the cytoplasm. The enzyme catalyses L-aspartate + H(+) = beta-alanine + CO2. It functions in the pathway cofactor biosynthesis; (R)-pantothenate biosynthesis; beta-alanine from L-aspartate: step 1/1. In terms of biological role, catalyzes the pyruvoyl-dependent decarboxylation of aspartate to produce beta-alanine. This is Aspartate 1-decarboxylase from Staphylococcus aureus (strain bovine RF122 / ET3-1).